Reading from the N-terminus, the 139-residue chain is Nucleoside diphosphate kinase (139 aa).

The ATP site is built by K11, F59, R87, T93, R104, and N114. H117 functions as the Pros-phosphohistidine intermediate in the catalytic mechanism.

Belongs to the NDK family. Homotetramer. Requires Mg(2+) as cofactor.

It localises to the cytoplasm. The catalysed reaction is a 2'-deoxyribonucleoside 5'-diphosphate + ATP = a 2'-deoxyribonucleoside 5'-triphosphate + ADP. It catalyses the reaction a ribonucleoside 5'-diphosphate + ATP = a ribonucleoside 5'-triphosphate + ADP. Major role in the synthesis of nucleoside triphosphates other than ATP. The ATP gamma phosphate is transferred to the NDP beta phosphate via a ping-pong mechanism, using a phosphorylated active-site intermediate. The chain is Nucleoside diphosphate kinase from Coxiella burnetii (strain CbuK_Q154) (Coxiella burnetii (strain Q154)).